Reading from the N-terminus, the 203-residue chain is Ribosome maturation factor RimP (203 aa).

A disordered region spans residues 184 to 203 (RRGSAPVEDEEGEGEAPTAH).

The protein belongs to the RimP family.

It is found in the cytoplasm. Its function is as follows. Required for maturation of 30S ribosomal subunits. This Methylobacterium nodulans (strain LMG 21967 / CNCM I-2342 / ORS 2060) protein is Ribosome maturation factor RimP.